The chain runs to 417 residues: Histidine--tRNA ligase (417 aa).

It belongs to the class-II aminoacyl-tRNA synthetase family. As to quaternary structure, homodimer.

It is found in the cytoplasm. The enzyme catalyses tRNA(His) + L-histidine + ATP = L-histidyl-tRNA(His) + AMP + diphosphate + H(+). This Nitratidesulfovibrio vulgaris (strain DP4) (Desulfovibrio vulgaris) protein is Histidine--tRNA ligase.